The following is a 476-amino-acid chain: Doublesex and mab-3 related transcription factor 3 (476 aa).

The segment at residues 29 to 76 (CARCRNHGVLSWLKGHKRYCRFKDCTCEKCILIIERQRVMAAQVALRR) is a DNA-binding region (DM). Disordered stretches follow at residues 89–130 (DSLR…RPAT) and 147–195 (GTLP…SKNC). Residues 102–121 (DAAATAATASQSSPASQASQ) show a composition bias toward low complexity. Residues 176-185 (FSDKDTDQRS) show a composition bias toward basic and acidic residues. The region spanning 255–290 (RPPLEVLKKIFPNQKPTVLELILKGCGGDLVSAVEV) is the DMA domain. Positions 418–432 (NSTSVFRSSPVLSSR) are enriched in polar residues. The disordered stretch occupies residues 418–476 (NSTSVFRSSPVLSSRTTEDPRISIPDDGCPIVAKQSIYTEDDYDERSDSSDSRILNTSS).

This sequence belongs to the DMRT family.

Its subcellular location is the nucleus. Probable transcription factor that plays a role in configuring the spinal circuits controlling stride in vertebrates. Involved in neuronal specification within a specific subdivision of spinal cord neurons and in the development of a coordinated locomotor network controlling limb movements. May regulate transcription during sexual development. The protein is Doublesex and mab-3 related transcription factor 3 (Dmrt3) of Rattus norvegicus (Rat).